Consider the following 79-residue polypeptide: Sec-independent protein translocase protein TatA (79 aa).

The helical transmembrane segment at 1-21 (MGSLSIWHWIVVIAVVLLLFG) threads the bilayer. Positions 42-60 (GLQDDEKTAEKPDAVKSLD) are enriched in basic and acidic residues. The interval 42 to 79 (GLQDDEKTAEKPDAVKSLDHNATTGTPPNRTDVGSKAV) is disordered. Polar residues predominate over residues 61 to 70 (HNATTGTPPN).

The protein belongs to the TatA/E family. The Tat system comprises two distinct complexes: a TatABC complex, containing multiple copies of TatA, TatB and TatC subunits, and a separate TatA complex, containing only TatA subunits. Substrates initially bind to the TatABC complex, which probably triggers association of the separate TatA complex to form the active translocon.

It is found in the cell inner membrane. Its function is as follows. Part of the twin-arginine translocation (Tat) system that transports large folded proteins containing a characteristic twin-arginine motif in their signal peptide across membranes. TatA could form the protein-conducting channel of the Tat system. The sequence is that of Sec-independent protein translocase protein TatA from Rhodopseudomonas palustris (strain HaA2).